The following is a 460-amino-acid chain: Elongation factor 1-alpha (460 aa).

Residue glycine 2 is modified to N,N,N-trimethylglycine. Lysine 3 bears the N6,N6-dimethyllysine; alternate mark. The residue at position 3 (lysine 3) is an N6-methyllysine; alternate. The tr-type G domain occupies 6 to 241 (KTHINVVVIG…DSIEPPKRPT (236 aa)). The interval 15-22 (GHVDSGKS) is G1. Position 15–22 (15–22 (GHVDSGKS)) interacts with GTP. Lysine 31 carries the post-translational modification N6-methyllysine. A G2 region spans residues 71-75 (GITID). Position 80 is an N6,N6,N6-trimethyllysine (lysine 80). The interval 92–95 (DAPG) is G3. GTP contacts are provided by residues 92-96 (DAPGH) and 154-157 (NKMD). Residues 154-157 (NKMD) form a G4 region. The tract at residues 193–195 (SGF) is G5. Residue lysine 317 is modified to N6,N6-dimethyllysine; alternate. Lysine 317 is modified (N6-methyllysine; alternate). Lysine 391 carries the N6-methyllysine modification.

This sequence belongs to the TRAFAC class translation factor GTPase superfamily. Classic translation factor GTPase family. EF-Tu/EF-1A subfamily.

It is found in the cytoplasm. This protein promotes the GTP-dependent binding of aminoacyl-tRNA to the A-site of ribosomes during protein biosynthesis. This is Elongation factor 1-alpha (TEF) from Podospora anserina (Pleurage anserina).